Reading from the N-terminus, the 539-residue chain is Chaperonin GroEL (539 aa).

ATP-binding positions include 29–32 (TLGP), 86–90 (DGTTT), glycine 413, and aspartate 494.

The protein belongs to the chaperonin (HSP60) family. As to quaternary structure, forms a cylinder of 14 subunits composed of two heptameric rings stacked back-to-back. Interacts with the co-chaperonin GroES.

The protein localises to the cytoplasm. It carries out the reaction ATP + H2O + a folded polypeptide = ADP + phosphate + an unfolded polypeptide.. Functionally, together with its co-chaperonin GroES, plays an essential role in assisting protein folding. The GroEL-GroES system forms a nano-cage that allows encapsulation of the non-native substrate proteins and provides a physical environment optimized to promote and accelerate protein folding. The protein is Chaperonin GroEL of Finegoldia magna (strain ATCC 29328 / DSM 20472 / WAL 2508) (Peptostreptococcus magnus).